The chain runs to 428 residues: Adenylosuccinate synthetase (428 aa).

GTP-binding positions include 12-18 (GDEGKGK) and 40-42 (GHT). The Proton acceptor role is filled by aspartate 13. Aspartate 13 and glycine 40 together coordinate Mg(2+). IMP is bound by residues 13-16 (DEGK), 38-41 (NAGH), threonine 128, arginine 142, glutamine 222, threonine 237, and arginine 301. Histidine 41 acts as the Proton donor in catalysis. 297–303 (TVTGRSR) is a binding site for substrate. GTP-binding positions include arginine 303, 329 to 331 (KLD), and 411 to 413 (STS).

This sequence belongs to the adenylosuccinate synthetase family. In terms of assembly, homodimer. The cofactor is Mg(2+).

The protein resides in the cytoplasm. The enzyme catalyses IMP + L-aspartate + GTP = N(6)-(1,2-dicarboxyethyl)-AMP + GDP + phosphate + 2 H(+). Its pathway is purine metabolism; AMP biosynthesis via de novo pathway; AMP from IMP: step 1/2. Plays an important role in the de novo pathway of purine nucleotide biosynthesis. Catalyzes the first committed step in the biosynthesis of AMP from IMP. This chain is Adenylosuccinate synthetase, found in Phenylobacterium zucineum (strain HLK1).